Reading from the N-terminus, the 147-residue chain is Peptidyl-lysine N-acetyltransferase YjaB (147 aa).

The region spanning 3–144 (ISIRRSRHEE…KPYPLLNLAY (142 aa)) is the N-acetyltransferase domain.

It belongs to the acetyltransferase family.

The enzyme catalyses L-lysyl-[protein] + acetyl-CoA = N(6)-acetyl-L-lysyl-[protein] + CoA + H(+). N-epsilon-lysine acetyltransferase that catalyzes acetylation of a large number of proteins. Binds acetyl-CoA. This chain is Peptidyl-lysine N-acetyltransferase YjaB (yjaB), found in Escherichia coli (strain K12).